Here is a 288-residue protein sequence, read N- to C-terminus: Intermediate transcription factor 3 small subunit (288 aa).

It belongs to the orthopoxvirus OPG134 family. As to quaternary structure, heterodimer of a 45 kDa (A23R) and a 32 kDa (A8R) subunit to form the virus intermediate transcription factor (VITF)-3.

In terms of biological role, acts with RNA polymerase to initiate transcription from intermediate gene promoters. The polypeptide is Intermediate transcription factor 3 small subunit (OPG134) (Homo sapiens (Human)).